Reading from the N-terminus, the 117-residue chain is Ig heavy chain V-A2 region K-25 (117 aa).

At Q1 the chain carries Pyrrolidone carboxylic acid. Positions 1–106 constitute an Ig-like domain; the sequence is QSVKESEGGL…GLSYLKSSVD (106 aa). A disulfide bridge connects residues C21 and C91.

This is Ig heavy chain V-A2 region K-25 from Oryctolagus cuniculus (Rabbit).